The sequence spans 338 residues: Mycothiol acetyltransferase (338 aa).

N-acetyltransferase domains lie at 29-173 and 181-338; these read PETY…HQLP and ISLR…NKFQ. Residue Asp-55 coordinates 1D-myo-inositol 2-(L-cysteinylamino)-2-deoxy-alpha-D-glucopyranoside. An acetyl-CoA-binding site is contributed by 105–107; that stretch reads LVV. Residues Glu-208, Lys-248, and Glu-261 each coordinate 1D-myo-inositol 2-(L-cysteinylamino)-2-deoxy-alpha-D-glucopyranoside. Residues 265-267 and 272-278 each bind acetyl-CoA; these read VGI and QGKGLGK. Residue Tyr-299 participates in 1D-myo-inositol 2-(L-cysteinylamino)-2-deoxy-alpha-D-glucopyranoside binding.

The protein belongs to the acetyltransferase family. MshD subfamily. In terms of assembly, monomer.

The catalysed reaction is 1D-myo-inositol 2-(L-cysteinylamino)-2-deoxy-alpha-D-glucopyranoside + acetyl-CoA = mycothiol + CoA + H(+). Its function is as follows. Catalyzes the transfer of acetyl from acetyl-CoA to desacetylmycothiol (Cys-GlcN-Ins) to form mycothiol. This chain is Mycothiol acetyltransferase, found in Renibacterium salmoninarum (strain ATCC 33209 / DSM 20767 / JCM 11484 / NBRC 15589 / NCIMB 2235).